We begin with the raw amino-acid sequence, 363 residues long: MTALQNDTFLRALRRQPTEYTPLWLMRQAGRYLPEYNATRARAGSFLGLAKNPAYATEVTLQPLDRYPLDAAILFSDILTVPDAMGLGLSFAQGEGPRFAHPLRTEADVQKLAVPDMASLQYVFDAVSEIRRALVQDGRQRVPLIGFSGSPWTLACYMVEGGGSDDFRTVKAMMYGRPDLMHRILEINAQAVTEYLNAQIEAGAQAVMIFDTWGGALADGMYQAFSLAYMRRVLAGLKREHDGQQVPAIVFTKGGGLWLEALADTGADAIGLDWTVNLAEARRRTGGRVALQGNIDPTVLFAPEAAIREQVRGVLDSYAAAGGSDGHVFNLGHGISQFTPPDNVSVLVDEVHRHSRKLRAGQK.

Residues 27 to 31 (RQAGR), aspartate 77, tyrosine 157, threonine 212, and histidine 333 each bind substrate.

This sequence belongs to the uroporphyrinogen decarboxylase family. As to quaternary structure, homodimer.

The protein localises to the cytoplasm. It carries out the reaction uroporphyrinogen III + 4 H(+) = coproporphyrinogen III + 4 CO2. Its pathway is porphyrin-containing compound metabolism; protoporphyrin-IX biosynthesis; coproporphyrinogen-III from 5-aminolevulinate: step 4/4. Catalyzes the decarboxylation of four acetate groups of uroporphyrinogen-III to yield coproporphyrinogen-III. The polypeptide is Uroporphyrinogen decarboxylase (Cupriavidus necator (strain ATCC 17699 / DSM 428 / KCTC 22496 / NCIMB 10442 / H16 / Stanier 337) (Ralstonia eutropha)).